The chain runs to 431 residues: Glutamyl-tRNA reductase (431 aa).

Residues 49 to 52 (TCNR), Ser-109, 114 to 116 (EGQ), and Gln-120 each bind substrate. The active-site Nucleophile is the Cys-50. Residue 189–194 (GAGKMS) participates in NADP(+) binding.

The protein belongs to the glutamyl-tRNA reductase family. Homodimer.

It carries out the reaction (S)-4-amino-5-oxopentanoate + tRNA(Glu) + NADP(+) = L-glutamyl-tRNA(Glu) + NADPH + H(+). Its pathway is porphyrin-containing compound metabolism; protoporphyrin-IX biosynthesis; 5-aminolevulinate from L-glutamyl-tRNA(Glu): step 1/2. It functions in the pathway porphyrin-containing compound metabolism; chlorophyll biosynthesis. Catalyzes the NADPH-dependent reduction of glutamyl-tRNA(Glu) to glutamate 1-semialdehyde (GSA). This chain is Glutamyl-tRNA reductase, found in Trichodesmium erythraeum (strain IMS101).